Here is a 231-residue protein sequence, read N- to C-terminus: Class II histocompatibility antigen, B-L beta chain (231 aa).

Residues 1–89 are beta-1; the sequence is FFQWSATVEC…IVAPLTLQRR (89 aa). Residues 1–194 lie on the Extracellular side of the membrane; that stretch reads FFQWSATVEC…PGDVSRSKLL (194 aa). 2 disulfides stabilise this stretch: cysteine 10/cysteine 74 and cysteine 111/cysteine 167. Residue asparagine 14 is glycosylated (N-linked (GlcNAc...) asparagine). The tract at residues 90-182 is beta-2; sequence EPKVRIFALQ…SLQQPITQRW (93 aa). An Ig-like C1-type domain is found at 91–179; sequence PKVRIFALQS…EHTSLQQPIT (89 aa). The tract at residues 183-194 is connecting peptide; the sequence is EPPGDVSRSKLL. The chain crosses the membrane as a helical span at residues 195–219; sequence MGVGGFVLGLVYLALGIFFFLCSKK. Over 220 to 231 the chain is Cytoplasmic; that stretch reads GQPDPTSPGILN.

This sequence belongs to the MHC class II family.

The protein localises to the membrane. The protein is Class II histocompatibility antigen, B-L beta chain of Gallus gallus (Chicken).